We begin with the raw amino-acid sequence, 350 residues long: Transmembrane protein 185A (350 aa).

7 helical membrane-spanning segments follow: residues 16-36, 41-61, 81-101, 111-131, 177-197, 211-231, and 240-260; these read LIYACLLLFSVLLALRLDGII, WAVFAPIWLWKLMVIVGASVG, FKAMLIAVGIHLLLLMFEVLV, FWLLVFMPLFFVSPVSVAACV, ILMSFLCLVVLYYIVWSVLFL, ITMALSWMTIVVPLLTFEILL, and AFSCIPIFVPLWLSLITLMAT. Residues 298–350 are mediates interaction with MAP1B; sequence DLHHEDNEETEETPVPEPPKIAPMFRKKARVVITQSPGKYALPPPKLNIEMPD.

It belongs to the TMEM185 family. Interacts with MAP1B.

It is found in the cell projection. The protein localises to the dendrite. The protein resides in the membrane. The protein is Transmembrane protein 185A (TMEM185A) of Pongo abelii (Sumatran orangutan).